We begin with the raw amino-acid sequence, 194 residues long: Imidazoleglycerol-phosphate dehydratase (194 aa).

This sequence belongs to the imidazoleglycerol-phosphate dehydratase family.

Its subcellular location is the cytoplasm. The catalysed reaction is D-erythro-1-(imidazol-4-yl)glycerol 3-phosphate = 3-(imidazol-4-yl)-2-oxopropyl phosphate + H2O. It functions in the pathway amino-acid biosynthesis; L-histidine biosynthesis; L-histidine from 5-phospho-alpha-D-ribose 1-diphosphate: step 6/9. The chain is Imidazoleglycerol-phosphate dehydratase from Thermus thermophilus (strain ATCC 27634 / DSM 579 / HB8).